Consider the following 250-residue polypeptide: MNFTVIIPARYASSRLPRKPLLDIAGKPMIQHVWEKAQQAGATRVIIATDHPEIEATAKAFGAEVCMTSDQHNSGTERLAEVIEKMQIADDEIIVNVQGDEPLIPPVIVSQVAENLDRCQVNMATLAVKLTTKEELFNPNAVKALADKNGMALYFSRAPIPFARDHFADCDDAFVASQNYLRHIGIYAYRAGFVKQYVAWQPTQLEQLESLEQLRALWYGEKIHIELAKQAPQVGVDTQEDLERVRRILA.

Belongs to the KdsB family.

The protein localises to the cytoplasm. The enzyme catalyses 3-deoxy-alpha-D-manno-oct-2-ulosonate + CTP = CMP-3-deoxy-beta-D-manno-octulosonate + diphosphate. It functions in the pathway nucleotide-sugar biosynthesis; CMP-3-deoxy-D-manno-octulosonate biosynthesis; CMP-3-deoxy-D-manno-octulosonate from 3-deoxy-D-manno-octulosonate and CTP: step 1/1. Its pathway is bacterial outer membrane biogenesis; lipopolysaccharide biosynthesis. Functionally, activates KDO (a required 8-carbon sugar) for incorporation into bacterial lipopolysaccharide in Gram-negative bacteria. The polypeptide is 3-deoxy-manno-octulosonate cytidylyltransferase 1 (Actinobacillus pleuropneumoniae serotype 5b (strain L20)).